We begin with the raw amino-acid sequence, 415 residues long: Small ribosomal subunit protein uS5m (415 aa).

A disordered region spans residues 1–31; that stretch reads MRRSGPELWKTLTSVSKSGQKKGRRNTRQPV. Positions 131–197 constitute an S5 DRBM domain; the sequence is FETYCLEVKR…GMASRKIFHV (67 aa). The disordered stretch occupies residues 396 to 415; the sequence is GVEPMPLGIGLSHVVPKKDD.

This sequence belongs to the universal ribosomal protein uS5 family. In terms of assembly, component of the mitochondrial ribosome small subunit (28S) which comprises a 12S rRNA and about 30 distinct proteins.

The protein localises to the mitochondrion. This chain is Small ribosomal subunit protein uS5m (mrps-5), found in Caenorhabditis briggsae.